Here is a 252-residue protein sequence, read N- to C-terminus: Octanoyltransferase (252 aa).

The BPL/LPL catalytic domain occupies 56–237; sequence ADTGDEIWLV…RLIANLDGAS (182 aa). Residues 96–103, 168–170, and 181–183 each bind substrate; these read RGGQITYH, ALG, and GLS. Residue cysteine 199 is the Acyl-thioester intermediate of the active site.

The protein belongs to the LipB family.

The protein localises to the cytoplasm. It carries out the reaction octanoyl-[ACP] + L-lysyl-[protein] = N(6)-octanoyl-L-lysyl-[protein] + holo-[ACP] + H(+). The protein operates within protein modification; protein lipoylation via endogenous pathway; protein N(6)-(lipoyl)lysine from octanoyl-[acyl-carrier-protein]: step 1/2. Functionally, catalyzes the transfer of endogenously produced octanoic acid from octanoyl-acyl-carrier-protein onto the lipoyl domains of lipoate-dependent enzymes. Lipoyl-ACP can also act as a substrate although octanoyl-ACP is likely to be the physiological substrate. The protein is Octanoyltransferase of Burkholderia lata (strain ATCC 17760 / DSM 23089 / LMG 22485 / NCIMB 9086 / R18194 / 383).